The chain runs to 229 residues: Large ribosomal subunit protein uL1 (229 aa).

The protein belongs to the universal ribosomal protein uL1 family. In terms of assembly, part of the 50S ribosomal subunit.

Its function is as follows. Binds directly to 23S rRNA. The L1 stalk is quite mobile in the ribosome, and is involved in E site tRNA release. Protein L1 is also a translational repressor protein, it controls the translation of the L11 operon by binding to its mRNA. In Streptococcus equi subsp. equi (strain 4047), this protein is Large ribosomal subunit protein uL1.